The following is a 154-amino-acid chain: Ribonuclease HI (154 aa).

The region spanning 1 to 142 (MTKHVEIFTD…CDELARTAAE (142 aa)) is the RNase H type-1 domain. Mg(2+) is bound by residues Asp10, Glu48, Asp70, and Asp134.

It belongs to the RNase H family. As to quaternary structure, monomer. Mg(2+) serves as cofactor.

The protein localises to the cytoplasm. The catalysed reaction is Endonucleolytic cleavage to 5'-phosphomonoester.. Functionally, endonuclease that specifically degrades the RNA of RNA-DNA hybrids. The protein is Ribonuclease HI of Vibrio parahaemolyticus serotype O3:K6 (strain RIMD 2210633).